The sequence spans 113 residues: Hydrogenase maturation factor HypA 2 (113 aa).

His2 contacts Ni(2+). Cys73, Cys76, Cys89, and Cys92 together coordinate Zn(2+).

It belongs to the HypA/HybF family.

Involved in the maturation of [NiFe] hydrogenases. Required for nickel insertion into the metal center of the hydrogenase. This is Hydrogenase maturation factor HypA 2 from Bradyrhizobium diazoefficiens (strain JCM 10833 / BCRC 13528 / IAM 13628 / NBRC 14792 / USDA 110).